The sequence spans 625 residues: Isocitrate dehydrogenase kinase/phosphatase (625 aa).

Residues 325–331 (APGIKGM) and K346 each bind ATP. D381 is a catalytic residue. The segment at 596 to 625 (RRHSPGRNDHELLTHLPPEPMLTGLSGMTP) is disordered.

Belongs to the AceK family.

It is found in the cytoplasm. It carries out the reaction L-seryl-[isocitrate dehydrogenase] + ATP = O-phospho-L-seryl-[isocitrate dehydrogenase] + ADP + H(+). In terms of biological role, bifunctional enzyme which can phosphorylate or dephosphorylate isocitrate dehydrogenase (IDH) on a specific serine residue. This is a regulatory mechanism which enables bacteria to bypass the Krebs cycle via the glyoxylate shunt in response to the source of carbon. When bacteria are grown on glucose, IDH is fully active and unphosphorylated, but when grown on acetate or ethanol, the activity of IDH declines drastically concomitant with its phosphorylation. The sequence is that of Isocitrate dehydrogenase kinase/phosphatase from Polaromonas sp. (strain JS666 / ATCC BAA-500).